The primary structure comprises 715 residues: Fatty acid oxidation complex subunit alpha (715 aa).

The segment at 1 to 190 (MDMTSAFTLN…RVGLVDEVVP (190 aa)) is enoyl-CoA hydratase. The interval 306 to 715 (GPLASVGVLG…WNSGETDLKE (410 aa)) is 3-hydroxyacyl-CoA dehydrogenase.

The protein in the N-terminal section; belongs to the enoyl-CoA hydratase/isomerase family. In the central section; belongs to the 3-hydroxyacyl-CoA dehydrogenase family. In terms of assembly, heterotetramer of two alpha chains (FadJ) and two beta chains (FadI).

Its subcellular location is the cytoplasm. It carries out the reaction a (3S)-3-hydroxyacyl-CoA = a (2E)-enoyl-CoA + H2O. It catalyses the reaction a 4-saturated-(3S)-3-hydroxyacyl-CoA = a (3E)-enoyl-CoA + H2O. The catalysed reaction is a (3S)-3-hydroxyacyl-CoA + NAD(+) = a 3-oxoacyl-CoA + NADH + H(+). The enzyme catalyses (3S)-3-hydroxybutanoyl-CoA = (3R)-3-hydroxybutanoyl-CoA. It functions in the pathway lipid metabolism; fatty acid beta-oxidation. In terms of biological role, catalyzes the formation of a hydroxyacyl-CoA by addition of water on enoyl-CoA. Also exhibits 3-hydroxyacyl-CoA epimerase and 3-hydroxyacyl-CoA dehydrogenase activities. The sequence is that of Fatty acid oxidation complex subunit alpha from Citrobacter koseri (strain ATCC BAA-895 / CDC 4225-83 / SGSC4696).